The primary structure comprises 212 residues: Interleukin-6 (212 aa).

The signal sequence occupies residues 1–29; the sequence is MNSFSTSAFGPVAFSLGLLLVLPAAFPAP. Intrachain disulfides connect Cys-72–Cys-78 and Cys-101–Cys-111. An N-linked (GlcNAc...) asparagine glycan is attached at Asn-73. Residue Asn-172 is glycosylated (N-linked (GlcNAc...) asparagine).

It belongs to the IL-6 superfamily. Component of a hexamer of two molecules each of IL6, IL6R and IL6ST; first binds to IL6R to associate with the signaling subunit IL6ST. Interacts with IL6R (via the N-terminal ectodomain); this interaction may be affected by IL6R-binding with SORL1, hence decreasing IL6 cis signaling. Interacts with SORL1 (via the N-terminal ectodomain); this interaction leads to IL6 internalization and lysosomal degradation. May form a trimeric complex with the soluble SORL1 ectodomain and soluble IL6R receptor; this interaction might stabilize circulating IL6, hence promoting IL6 trans signaling.

The protein resides in the secreted. In terms of biological role, cytokine with a wide variety of biological functions in immunity, tissue regeneration, and metabolism. Binds to IL6R, then the complex associates to the signaling subunit IL6ST/gp130 to trigger the intracellular IL6-signaling pathway. The interaction with the membrane-bound IL6R and IL6ST stimulates 'classic signaling', whereas the binding of IL6 and soluble IL6R to IL6ST stimulates 'trans-signaling'. Alternatively, 'cluster signaling' occurs when membrane-bound IL6:IL6R complexes on transmitter cells activate IL6ST receptors on neighboring receiver cells. Functionally, IL6 is a potent inducer of the acute phase response. Rapid production of IL6 contributes to host defense during infection and tissue injury, but excessive IL6 synthesis is involved in disease pathology. In the innate immune response, is synthesized by myeloid cells, such as macrophages and dendritic cells, upon recognition of pathogens through toll-like receptors (TLRs) at the site of infection or tissue injury. In the adaptive immune response, is required for the differentiation of B cells into immunoglobulin-secreting cells. Plays a major role in the differentiation of CD4(+) T cell subsets. Essential factor for the development of T follicular helper (Tfh) cells that are required for the induction of germinal-center formation. Required to drive naive CD4(+) T cells to the Th17 lineage. Also required for proliferation of myeloma cells and the survival of plasmablast cells. Acts as an essential factor in bone homeostasis and on vessels directly or indirectly by induction of VEGF, resulting in increased angiogenesis activity and vascular permeability. Induces, through 'trans-signaling' and synergistically with IL1B and TNF, the production of VEGF. Involved in metabolic controls, is discharged into the bloodstream after muscle contraction increasing lipolysis and improving insulin resistance. 'Trans-signaling' in central nervous system also regulates energy and glucose homeostasis. Mediates, through GLP-1, crosstalk between insulin-sensitive tissues, intestinal L cells and pancreatic islets to adapt to changes in insulin demand. Also acts as a myokine. Plays a protective role during liver injury, being required for maintenance of tissue regeneration. Also has a pivotal role in iron metabolism by regulating HAMP/hepcidin expression upon inflammation or bacterial infection. Through activation of IL6ST-YAP-NOTCH pathway, induces inflammation-induced epithelial regeneration. The polypeptide is Interleukin-6 (IL6) (Cercocebus atys (Sooty mangabey)).